A 291-amino-acid polypeptide reads, in one-letter code: uncharacterized protein (291 aa).

It belongs to the PhyH family.

This is an uncharacterized protein from Mycobacterium bovis (strain ATCC BAA-935 / AF2122/97).